The sequence spans 123 residues: Large ribosomal subunit protein uL14 (123 aa).

It belongs to the universal ribosomal protein uL14 family. In terms of assembly, part of the 50S ribosomal subunit. Forms a cluster with proteins L3 and L19. In the 70S ribosome, L14 and L19 interact and together make contacts with the 16S rRNA in bridges B5 and B8.

In terms of biological role, binds to 23S rRNA. Forms part of two intersubunit bridges in the 70S ribosome. This chain is Large ribosomal subunit protein uL14, found in Vibrio parahaemolyticus serotype O3:K6 (strain RIMD 2210633).